The chain runs to 646 residues: ATP-dependent zinc metalloprotease FtsH (646 aa).

At 1–4 the chain is on the cytoplasmic side; it reads MTRS. The chain crosses the membrane as a helical span at residues 5-25; the sequence is LLWQMVIVLGAILMVNYVLTT. Residues 26-120 are Periplasmic-facing; sequence LTPQTQEPVV…VRPESKPSPW (95 aa). A helical transmembrane segment spans residues 121-141; that stretch reads ATAMIYMLPWLLIVGVWWFVI. Topologically, residues 142-646 are cytoplasmic; it reads KGMRTRQGPG…GELAGGAVEG (505 aa). 216–223 lines the ATP pocket; the sequence is GPPGTGKT. Residue His437 coordinates Zn(2+). The active site involves Glu438. Residues His441 and Asp513 each coordinate Zn(2+).

In the central section; belongs to the AAA ATPase family. The protein in the C-terminal section; belongs to the peptidase M41 family. As to quaternary structure, homohexamer. The cofactor is Zn(2+).

The protein resides in the cell inner membrane. Its function is as follows. Acts as a processive, ATP-dependent zinc metallopeptidase for both cytoplasmic and membrane proteins. Plays a role in the quality control of integral membrane proteins. This chain is ATP-dependent zinc metalloprotease FtsH, found in Syntrophotalea carbinolica (strain DSM 2380 / NBRC 103641 / GraBd1) (Pelobacter carbinolicus).